The chain runs to 389 residues: Phospho-N-acetylmuramoyl-pentapeptide-transferase (389 aa).

The next 10 helical transmembrane spans lie at 25–45 (RAVMATITALLIGLVCGPAVI), 73–93 (TMGGVLILLGIAVATLLWADL), 97–117 (FIWIVMLVTFGFGVIGWVDDY), 135–155 (FWQSVIGLFAAVYLAFSVSEA), 190–210 (ISYPLGVWGFIVLTYLVIVGA), 222–242 (GLVIMPVVLVGASLGVFAYVM), 259–279 (AGELLIFCSAMGGAGLAFLWF), 287–307 (FMGDVGALALGGALGTVAVIV), 311–331 (IVLFIMGGIFVAETLSVMLQV), and 366–386 (QVVVRFWIITLMLCLFGLSTL).

This sequence belongs to the glycosyltransferase 4 family. MraY subfamily. Mg(2+) is required as a cofactor.

It is found in the cell inner membrane. It carries out the reaction UDP-N-acetyl-alpha-D-muramoyl-L-alanyl-gamma-D-glutamyl-meso-2,6-diaminopimeloyl-D-alanyl-D-alanine + di-trans,octa-cis-undecaprenyl phosphate = di-trans,octa-cis-undecaprenyl diphospho-N-acetyl-alpha-D-muramoyl-L-alanyl-D-glutamyl-meso-2,6-diaminopimeloyl-D-alanyl-D-alanine + UMP. The protein operates within cell wall biogenesis; peptidoglycan biosynthesis. Catalyzes the initial step of the lipid cycle reactions in the biosynthesis of the cell wall peptidoglycan: transfers peptidoglycan precursor phospho-MurNAc-pentapeptide from UDP-MurNAc-pentapeptide onto the lipid carrier undecaprenyl phosphate, yielding undecaprenyl-pyrophosphoryl-MurNAc-pentapeptide, known as lipid I. The polypeptide is Phospho-N-acetylmuramoyl-pentapeptide-transferase (Paraburkholderia phytofirmans (strain DSM 17436 / LMG 22146 / PsJN) (Burkholderia phytofirmans)).